Reading from the N-terminus, the 641-residue chain is 1-phosphatidylinositol 4,5-bisphosphate phosphodiesterase zeta-1 (641 aa).

One can recognise an EF-hand domain in the interval 35-70 (CSYIHVKRIFKDNDRLKQGRITIEEFRAIYRILTHR). The PI-PLC X-box domain occupies 155–299 (QDMTHPLNDY…LKFKVLVKNK (145 aa)). Catalysis depends on residues His170 and His215. Residues 382 to 498 (LSDLVIYTKA…GYILKPHFLR (117 aa)) form the PI-PLC Y-box domain. A C2 domain is found at 498-622 (RESESYFNPS…KGYRRVPLFS (125 aa)).

As to quaternary structure, interacts via its C2 domain with PtdIns(3)P and, to a lesser extent, PtdIns(5)P in vitro. Ca(2+) serves as cofactor.

Its subcellular location is the nucleus. The protein resides in the cytoplasm. The protein localises to the perinuclear region. The catalysed reaction is a 1,2-diacyl-sn-glycero-3-phospho-(1D-myo-inositol-4,5-bisphosphate) + H2O = 1D-myo-inositol 1,4,5-trisphosphate + a 1,2-diacyl-sn-glycerol + H(+). Functionally, the production of the second messenger molecules diacylglycerol (DAG) and inositol 1,4,5-trisphosphate (IP3) is mediated by activated phosphatidylinositol-specific phospholipase C enzymes. In vitro, hydrolyzes PtdIns(4,5)P2 in a Ca(2+)-dependent manner. Triggers intracellular Ca(2+) oscillations in oocytes solely during M phase and is involved in inducing oocyte activation and initiating embryonic development up to the blastocyst stage. Is therefore a strong candidate for the egg-activating soluble sperm factor that is transferred from the sperm into the egg cytoplasm following gamete membrane fusion. May exert an inhibitory effect on phospholipase-C-coupled processes that depend on calcium ions and protein kinase C, including CFTR trafficking and function. This is 1-phosphatidylinositol 4,5-bisphosphate phosphodiesterase zeta-1 from Macaca fascicularis (Crab-eating macaque).